The sequence spans 122 residues: LYR motif-containing protein 1 (122 aa).

The protein belongs to the complex I LYR family. As to expression, high levels in adipose tissue.

The protein localises to the nucleus. Its function is as follows. May promote cell proliferation and inhibition of apoptosis of preadipocytes. The protein is LYR motif-containing protein 1 (LYRM1) of Homo sapiens (Human).